Consider the following 514-residue polypeptide: Polygalacturonase (514 aa).

The first 22 residues, 1–22, serve as a signal peptide directing secretion; the sequence is MAMKFIAPMAFVAMQLIIMAAA. A propeptide spanning residues 23–45 is cleaved from the precursor; that stretch reads EDQSAQIMLDSDIEQYLRSNRSL. PbH1 repeat units lie at residues 214–240, 241–262, 264–284, 294–315, and 323–344; these read CEGV…DIFA, SKNF…AIGT, SSNI…SIGS, VSYV…RIKT, and ASHI…LINQ. Asp255 functions as the Proton donor in the catalytic mechanism. His278 is a catalytic residue. Residues 434–514 constitute a propeptide that is removed on maturation; it reads AKRKESKSHK…CSRHGKIYHP (81 aa). 2 N-linked (GlcNAc...) asparagine glycosylation sites follow: Asn460 and Asn472.

The protein belongs to the glycosyl hydrolase 28 family.

The protein resides in the secreted. It localises to the plastid. The protein localises to the amyloplast. It is found in the cell wall. The catalysed reaction is (1,4-alpha-D-galacturonosyl)n+m + H2O = (1,4-alpha-D-galacturonosyl)n + (1,4-alpha-D-galacturonosyl)m.. This Cryptomeria japonica (Japanese cedar) protein is Polygalacturonase.